The sequence spans 158 residues: Phosphopantetheine adenylyltransferase (158 aa).

Residue Ser10 coordinates substrate. Residues 10-11 (SF) and His18 each bind ATP. The substrate site is built by Lys42, Leu74, and Arg88. Residues 89-91 (GLR), Glu99, and 124-130 (YANISSS) contribute to the ATP site.

Belongs to the bacterial CoaD family. Homohexamer. The cofactor is Mg(2+).

The protein resides in the cytoplasm. The enzyme catalyses (R)-4'-phosphopantetheine + ATP + H(+) = 3'-dephospho-CoA + diphosphate. It functions in the pathway cofactor biosynthesis; coenzyme A biosynthesis; CoA from (R)-pantothenate: step 4/5. Functionally, reversibly transfers an adenylyl group from ATP to 4'-phosphopantetheine, yielding dephospho-CoA (dPCoA) and pyrophosphate. This chain is Phosphopantetheine adenylyltransferase, found in Vesicomyosocius okutanii subsp. Calyptogena okutanii (strain HA).